We begin with the raw amino-acid sequence, 371 residues long: Chaperone protein DnaJ (371 aa).

One can recognise a J domain in the interval 5 to 69 (DYYEVLGLSK…QKRAQYDQFG (65 aa)). A CR-type zinc finger spans residues 133–215 (GKELNVEIPV…CHGSGKVRKR (83 aa)). Zn(2+) contacts are provided by Cys-146, Cys-149, Cys-163, Cys-166, Cys-189, Cys-192, Cys-203, and Cys-206. CXXCXGXG motif repeat units follow at residues 146–153 (CDTCKGSG), 163–170 (CKHCSGSG), 189–196 (CGHCSGTG), and 203–210 (CTTCHGSG).

It belongs to the DnaJ family. As to quaternary structure, homodimer. Zn(2+) serves as cofactor.

The protein localises to the cytoplasm. In terms of biological role, participates actively in the response to hyperosmotic and heat shock by preventing the aggregation of stress-denatured proteins and by disaggregating proteins, also in an autonomous, DnaK-independent fashion. Unfolded proteins bind initially to DnaJ; upon interaction with the DnaJ-bound protein, DnaK hydrolyzes its bound ATP, resulting in the formation of a stable complex. GrpE releases ADP from DnaK; ATP binding to DnaK triggers the release of the substrate protein, thus completing the reaction cycle. Several rounds of ATP-dependent interactions between DnaJ, DnaK and GrpE are required for fully efficient folding. Also involved, together with DnaK and GrpE, in the DNA replication of plasmids through activation of initiation proteins. This is Chaperone protein DnaJ from Bacillus cereus (strain ATCC 10987 / NRS 248).